A 78-amino-acid chain; its full sequence is Small ribosomal subunit protein bS18 (78 aa).

It belongs to the bacterial ribosomal protein bS18 family. Part of the 30S ribosomal subunit. Forms a tight heterodimer with protein bS6.

In terms of biological role, binds as a heterodimer with protein bS6 to the central domain of the 16S rRNA, where it helps stabilize the platform of the 30S subunit. The sequence is that of Small ribosomal subunit protein bS18 from Kocuria rhizophila (strain ATCC 9341 / DSM 348 / NBRC 103217 / DC2201).